The sequence spans 596 residues: Aspartic proteinase MKC7 (596 aa).

Residues 1–22 (MKLSVLTFVVDALLVCSSIVDA) form the signal peptide. Positions 23–65 (GVTDFPSLPSNEVYVKMNFQKKYGSSFENALDDTKGRTRLMTR) are excised as a propeptide. The Peptidase A1 domain occupies 81–468 (YSVELDIGTP…DLDNMEISMA (388 aa)). Asp99 is a catalytic residue. N-linked (GlcNAc...) asparagine glycans are attached at residues Asn180, Asn190, Asn219, Asn229, Asn232, Asn286, and Asn346. Asp360 is a catalytic residue. Asn471 and Asn517 each carry an N-linked (GlcNAc...) asparagine glycan. A compositionally biased stretch (low complexity) spans 530 to 570 (ATSSSSSKGQKTQTSTTALSISKSTSSTSSTGMLSPTSSSS). The interval 530 to 578 (ATSSSSSKGQKTQTSTTALSISKSTSSTSSTGMLSPTSSSSTRKENGGH) is disordered. The GPI-anchor amidated asparagine moiety is linked to residue Asn575. The propeptide at 576–596 (GGHNLNPPFFARFITAIFHHI) is removed in mature form.

It belongs to the peptidase A1 family.

It is found in the cell membrane. It carries out the reaction Hydrolyzes various precursor proteins with Arg or Lys in P1, and commonly Arg or Lys also in P2. The P3 amino acid is usually non-polar, but otherwise additional basic amino acids are favorable in both non-prime and prime positions.. Its function is as follows. Cleaves proteins C-terminally to the most C-terminal basic residue. Can process the alpha-mating factor precursor. Required for cell wall integrity. In Saccharomyces cerevisiae (strain ATCC 204508 / S288c) (Baker's yeast), this protein is Aspartic proteinase MKC7 (MKC7).